The primary structure comprises 400 residues: Putative F-box protein At1g30920 (400 aa).

The F-box domain occupies 4 to 49 (EENTDSIPIDLILDILSRLPSKSIARCRCVSKLWESMIRQSYFTEL).

The chain is Putative F-box protein At1g30920 from Arabidopsis thaliana (Mouse-ear cress).